The sequence spans 1063 residues: JmjC domain-containing histone demethylation protein 1 (1063 aa).

Residues 86 to 266 enclose the JmjC domain; sequence LYNVLSLEYS…TQLRVYQVEN (181 aa). Threonine 160 serves as a coordination point for substrate. Fe cation contacts are provided by histidine 163 and aspartate 165. Substrate is bound at residue lysine 180. Histidine 234 provides a ligand contact to Fe cation. Residues 379-389 show a composition bias toward acidic residues; the sequence is GLEEEAEDEDV. Disordered regions lie at residues 379–400, 554–750, and 776–1040; these read GLEEEAEDEDVKPETKKEAEER, ESDE…NPYN, and VELH…KRAK. The segment covering 390 to 400 has biased composition (basic and acidic residues); that stretch reads KPETKKEAEER. 2 stretches are compositionally biased toward acidic residues: residues 594-605 and 613-631; these read PEYDEDMEEYDP and ELEEEEEEEEGEEEEEEEY. Over residues 636 to 646 the composition is skewed to low complexity; that stretch reads TRRSSTRGSAS. Basic and acidic residues-rich tracts occupy residues 647 to 665, 674 to 712, 776 to 806, 813 to 835, and 892 to 902; these read TKEEPQEEKEEKEAAPKKE, EKSSKPEKDTTEAKLKKEKKKKEMERRLRDSELEAELRA, VELHIEKNLYKLEPKRDESESREPSMEHEDS, PYDRYSHYHTENSHFQEDQDSHR, and EPRRSNDRRTS. Low complexity predominate over residues 926–937; sequence AEAASASSSRHS. 2 stretches are compositionally biased toward polar residues: residues 950-963 and 973-982; these read LNSSRHSSTDTPMY and WLPNTSNVTR. A compositionally biased stretch (pro residues) spans 1005–1016; it reads PPFPRSITPPPV. The segment covering 1020-1030 has biased composition (polar residues); that stretch reads ELKSQSNGRKS. A compositionally biased stretch (basic and acidic residues) spans 1031–1040; the sequence is NYSEDGKRAK.

It belongs to the JHDM1 histone demethylase family. The cofactor is Fe(2+).

The protein localises to the nucleus. The catalysed reaction is N(6),N(6)-dimethyl-L-lysyl(36)-[histone H3] + 2 2-oxoglutarate + 2 O2 = L-lysyl(36)-[histone H3] + 2 formaldehyde + 2 succinate + 2 CO2. Histone demethylase that specifically demethylates 'Lys-36' of histone H3, thereby playing a central role in histone code. The protein is JmjC domain-containing histone demethylation protein 1 (jhdm-1) of Caenorhabditis briggsae.